A 339-amino-acid chain; its full sequence is UDP-N-acetylglucosamine--N-acetylmuramyl-(pentapeptide) pyrophosphoryl-undecaprenol N-acetylglucosamine transferase (339 aa).

UDP-N-acetyl-alpha-D-glucosamine is bound by residues 10-12, Asn124, Arg168, Ser188, Ile235, and Gln280; that span reads TGG.

This sequence belongs to the glycosyltransferase 28 family. MurG subfamily.

The protein localises to the cell inner membrane. It carries out the reaction di-trans,octa-cis-undecaprenyl diphospho-N-acetyl-alpha-D-muramoyl-L-alanyl-D-glutamyl-meso-2,6-diaminopimeloyl-D-alanyl-D-alanine + UDP-N-acetyl-alpha-D-glucosamine = di-trans,octa-cis-undecaprenyl diphospho-[N-acetyl-alpha-D-glucosaminyl-(1-&gt;4)]-N-acetyl-alpha-D-muramoyl-L-alanyl-D-glutamyl-meso-2,6-diaminopimeloyl-D-alanyl-D-alanine + UDP + H(+). It functions in the pathway cell wall biogenesis; peptidoglycan biosynthesis. Cell wall formation. Catalyzes the transfer of a GlcNAc subunit on undecaprenyl-pyrophosphoryl-MurNAc-pentapeptide (lipid intermediate I) to form undecaprenyl-pyrophosphoryl-MurNAc-(pentapeptide)GlcNAc (lipid intermediate II). This is UDP-N-acetylglucosamine--N-acetylmuramyl-(pentapeptide) pyrophosphoryl-undecaprenol N-acetylglucosamine transferase from Pseudothermotoga lettingae (strain ATCC BAA-301 / DSM 14385 / NBRC 107922 / TMO) (Thermotoga lettingae).